Reading from the N-terminus, the 372-residue chain is Heat-inducible transcription repressor HrcA (372 aa).

It belongs to the HrcA family.

Its function is as follows. Negative regulator of class I heat shock genes (grpE-dnaK-dnaJ and groELS operons). Prevents heat-shock induction of these operons. The sequence is that of Heat-inducible transcription repressor HrcA from Chloroflexus aurantiacus (strain ATCC 29366 / DSM 635 / J-10-fl).